The sequence spans 634 residues: RING finger protein 207 (634 aa).

Residues 25-63 (CHLCQEQYEHPCLLDCYHTFCASCLRGRVADSRLTCPVC) form an RING-type zinc finger. The B box-type; atypical zinc finger occupies 93–145 (EETVQCANCDLECKKQDVDAMYYCNTCCQPLCRDCRETTHKAKMFSRHEIVSL). The Zn(2+) site is built by Cys-98, Cys-101, Cys-127, and His-132. A disordered region spans residues 575-634 (YEDSTSTADTQPSNELSCNTEDNWTLNSLSEETNPKNKDYYRTNKQKNTTDSTNRKEIPM). A compositionally biased stretch (polar residues) spans 577 to 606 (DSTSTADTQPSNELSCNTEDNWTLNSLSEE). Residues 607–616 (TNPKNKDYYR) are compositionally biased toward basic and acidic residues.

It is found in the cytoplasm. Its function is as follows. Plays a role in cardiac repolarization possibly by stabilizing membrane expression of the potassium channel kcnh6a/zerg, or by assisting its synthesis, folding or export from the endoplasmic reticulum, in a heat shock protein-dependent manner. The chain is RING finger protein 207 (rnf207b) from Danio rerio (Zebrafish).